The sequence spans 311 residues: Methionyl-tRNA formyltransferase (311 aa).

Ser110–Pro113 contributes to the (6S)-5,6,7,8-tetrahydrofolate binding site.

The protein belongs to the Fmt family.

It carries out the reaction L-methionyl-tRNA(fMet) + (6R)-10-formyltetrahydrofolate = N-formyl-L-methionyl-tRNA(fMet) + (6S)-5,6,7,8-tetrahydrofolate + H(+). Its function is as follows. Attaches a formyl group to the free amino group of methionyl-tRNA(fMet). The formyl group appears to play a dual role in the initiator identity of N-formylmethionyl-tRNA by promoting its recognition by IF2 and preventing the misappropriation of this tRNA by the elongation apparatus. This chain is Methionyl-tRNA formyltransferase, found in Acidobacterium capsulatum (strain ATCC 51196 / DSM 11244 / BCRC 80197 / JCM 7670 / NBRC 15755 / NCIMB 13165 / 161).